Reading from the N-terminus, the 179-residue chain is ATP synthase subunit b (179 aa).

The chain crosses the membrane as a helical span at residues 13–33 (IHIDELVFGLIAFAVIFALVY).

The protein belongs to the ATPase B chain family. F-type ATPases have 2 components, F(1) - the catalytic core - and F(0) - the membrane proton channel. F(1) has five subunits: alpha(3), beta(3), gamma(1), delta(1), epsilon(1). F(0) has three main subunits: a(1), b(2) and c(10-14). The alpha and beta chains form an alternating ring which encloses part of the gamma chain. F(1) is attached to F(0) by a central stalk formed by the gamma and epsilon chains, while a peripheral stalk is formed by the delta and b chains.

It localises to the cell membrane. F(1)F(0) ATP synthase produces ATP from ADP in the presence of a proton or sodium gradient. F-type ATPases consist of two structural domains, F(1) containing the extramembraneous catalytic core and F(0) containing the membrane proton channel, linked together by a central stalk and a peripheral stalk. During catalysis, ATP synthesis in the catalytic domain of F(1) is coupled via a rotary mechanism of the central stalk subunits to proton translocation. Its function is as follows. Component of the F(0) channel, it forms part of the peripheral stalk, linking F(1) to F(0). This is ATP synthase subunit b from Thermobifida fusca (strain YX).